The following is a 517-amino-acid chain: Protein disulfide-isomerase A5 (517 aa).

Positions 1–21 are cleaved as a signal peptide; sequence MARAWGLLLAIGVVLPTWLSS. Cystine bridges form between Cys83–Cys92, Cys180–Cys183, Cys303–Cys306, and Cys424–Cys427. 3 consecutive Thioredoxin domains span residues 132–259, 268–382, and 376–504; these read FLKD…NPLP, PWAD…NPEA, and WMQN…TLRE. Positions 514-517 match the Prevents secretion from ER motif; sequence REEL.

The protein belongs to the protein disulfide isomerase family. Interacts with CALR (via P-domain).

It is found in the endoplasmic reticulum lumen. The enzyme catalyses Catalyzes the rearrangement of -S-S- bonds in proteins.. This chain is Protein disulfide-isomerase A5 (Pdia5), found in Mus musculus (Mouse).